A 154-amino-acid chain; its full sequence is Putative NADPH-dependent 7-cyano-7-deazaguanine reductase (154 aa).

The Proton donor role is filled by Asp52. Substrate-binding positions include 67 to 69 (VES) and 86 to 87 (HE).

Belongs to the GTP cyclohydrolase I family. QueF type 1 subfamily.

The protein localises to the cytoplasm. It catalyses the reaction 7-aminomethyl-7-carbaguanine + 2 NADP(+) = 7-cyano-7-deazaguanine + 2 NADPH + 3 H(+). It participates in tRNA modification; tRNA-queuosine biosynthesis. Functionally, catalyzes the NADPH-dependent reduction of 7-cyano-7-deazaguanine (preQ0) to 7-aminomethyl-7-deazaguanine (preQ1). The chain is Putative NADPH-dependent 7-cyano-7-deazaguanine reductase from Streptococcus pneumoniae serotype 4 (strain ATCC BAA-334 / TIGR4).